The sequence spans 247 residues: Fibroblast growth factor 14 (247 aa).

Disordered regions lie at residues 1–38 (MAAA…KNRG) and 214–247 (VGET…SKTT). The segment covering 15–25 (QAREQHWDRPS) has biased composition (basic and acidic residues).

This sequence belongs to the heparin-binding growth factors family. In terms of assembly, interacts with SCN8A. In terms of tissue distribution, nervous system.

Its subcellular location is the nucleus. Probably involved in nervous system development and function. The chain is Fibroblast growth factor 14 (FGF14) from Homo sapiens (Human).